Consider the following 536-residue polypeptide: Serine protease inhibitor 28Dc (536 aa).

Positions 1–16 (MWRLLLALLLVSSVCC) are cleaved as a signal peptide. Residue N355 is glycosylated (N-linked (GlcNAc...) asparagine).

Belongs to the serpin family.

Its subcellular location is the secreted. Serine protease inhibitor which is required for pupal viability and plays an essential role in regulating the melanization reaction. Inhibits spontaneous melanization and appears to be involved in the melanization immune response to physical wounding in larvae and adults. Acts by negatively regulating the Hayan-phenoloxidase (PPO1) cascade in the hemolymph and possibly the trachea. May function by controlling the initial release of the activated form of PPO1, phenoloxidase (PO) and thus maintains PO availability for processes such as wound response and pigmentation. In Drosophila melanogaster (Fruit fly), this protein is Serine protease inhibitor 28Dc.